Consider the following 283-residue polypeptide: NADPH-dependent 7-cyano-7-deazaguanine reductase (283 aa).

Substrate is bound at residue 90 to 92 (IES). 92–93 (SK) is an NADPH binding site. Cysteine 190 serves as the catalytic Thioimide intermediate. Catalysis depends on aspartate 197, which acts as the Proton donor. 229-230 (HE) is a binding site for substrate. 258-259 (RG) contacts NADPH.

It belongs to the GTP cyclohydrolase I family. QueF type 2 subfamily. As to quaternary structure, homodimer.

The protein resides in the cytoplasm. The enzyme catalyses 7-aminomethyl-7-carbaguanine + 2 NADP(+) = 7-cyano-7-deazaguanine + 2 NADPH + 3 H(+). Its pathway is tRNA modification; tRNA-queuosine biosynthesis. Catalyzes the NADPH-dependent reduction of 7-cyano-7-deazaguanine (preQ0) to 7-aminomethyl-7-deazaguanine (preQ1). The sequence is that of NADPH-dependent 7-cyano-7-deazaguanine reductase from Dechloromonas aromatica (strain RCB).